The primary structure comprises 503 residues: 2-isopropylmalate synthase (503 aa).

The region spanning 4–264 is the Pyruvate carboxyltransferase domain; sequence LYIFDTTLRD…EVSIKTEEIY (261 aa). Mn(2+) is bound by residues aspartate 13, histidine 201, histidine 203, and asparagine 237. Residues 388–503 are regulatory domain; it reads KLRHLQVVSG…NQLVMLKGKD (116 aa).

Belongs to the alpha-IPM synthase/homocitrate synthase family. LeuA type 1 subfamily. As to quaternary structure, homodimer. Mn(2+) is required as a cofactor.

Its subcellular location is the cytoplasm. The catalysed reaction is 3-methyl-2-oxobutanoate + acetyl-CoA + H2O = (2S)-2-isopropylmalate + CoA + H(+). Its pathway is amino-acid biosynthesis; L-leucine biosynthesis; L-leucine from 3-methyl-2-oxobutanoate: step 1/4. Its function is as follows. Catalyzes the condensation of the acetyl group of acetyl-CoA with 3-methyl-2-oxobutanoate (2-ketoisovalerate) to form 3-carboxy-3-hydroxy-4-methylpentanoate (2-isopropylmalate). This chain is 2-isopropylmalate synthase, found in Dictyoglomus turgidum (strain DSM 6724 / Z-1310).